Reading from the N-terminus, the 447-residue chain is METLRFSSNTMQVSFVCQRCNQPLKLDTSFNVLDRMTIHELTAPLVMVTANKQQDSGESSSFPEETFLENKQDGVARKFIPPARMMSAESTNSFTLIGEASDGGTMENLSRRLKVTSNLFDIMSGQTDIDHPLCEECTDTLLDHLDTQLNITENECQNYKSCLELLSQLPEEEEASLLNALQQLKQEEESLIQELESIETKREAVAKELDEGRNHSQLMDTEELRYQKEYCEFKRQQLELDDDLKSVDNQMRYCQIQLDKLKKTNVFNATFHIWHSGQFGTINNFRLGRLPSVPVEWNEINAAWGQTVLLLHALASKMGLCFQRYQLVPYGNHSYLESLSDKSKELPLYCSGGLRFFWDNKFDHAMVAFLDCVQQFKEEVEKDDTGFCLPYRMDVDKGKIEDTGGSGGSYSIKTQFNSEEQWTKALKFMLTNLKWGLAWVSSQFYNR.

The BH3 signature appears at 105–124; the sequence is TMENLSRRLKVTSNLFDIMS. An interaction with BCL2 and BCL2L1 isoform Bcl-X(L) region spans residues 109–156; it reads LSRRLKVTSNLFDIMSGQTDIDHPLCEECTDTLLDHLDTQLNITENEC. The stretch at 140–214 forms a coiled coil; sequence TLLDHLDTQL…VAKELDEGRN (75 aa). Residues 242-447 form an evolutionary conserved domain (ECD) region; the sequence is DDLKSVDNQM…AWVSSQFYNR (206 aa). Lys399 participates in a covalent cross-link: Glycyl lysine isopeptide (Lys-Gly) (interchain with G-Cter in ubiquitin). The interval 422–447 is required for membrane-association; the sequence is WTKALKFMLTNLKWGLAWVSSQFYNR.

Belongs to the beclin family. In terms of assembly, component of the PI3K (PI3KC3/PI3K-III/class III phosphatidylinositol 3-kinase) complex. Interacts with the poly-Gln domain of ATXN3; the interaction causes deubiquitination at Lys-399 and stabilizes BECN1. Post-translationally, polyubiquitinated at Lys-399 with 'Lys-48'-linkages. 'Lys-48'-linked polyubiquitination of Lys-399 leads to degradation. Deubiquitinated by ATXN3, leading to stabilization.

The protein localises to the cytoplasm. The protein resides in the golgi apparatus. It is found in the trans-Golgi network membrane. Its subcellular location is the endosome membrane. It localises to the endoplasmic reticulum membrane. The protein localises to the mitochondrion membrane. The protein resides in the endosome. It is found in the cytoplasmic vesicle. Its subcellular location is the autophagosome. Plays a central role in autophagy. Acts as a core subunit of different PI3K complex forms that mediate formation of phosphatidylinositol 3-phosphate and are believed to play a role in multiple membrane trafficking pathways: PI3KC3-C1 is involved in initiation of autophagosomes and PI3KC3-C2 in maturation of autophagosomes and endocytosis. Involved in regulation of degradative endocytic trafficking and required for the abscission step in cytokinesis, probably in the context of PI3KC3-C2. Essential for the formation of PI3KC3-C2 but not PI3KC3-C1 PI3K complex forms. Involved in endocytosis including endosome formation in neuronal cells. The chain is Beclin-1 (becn1) from Danio rerio (Zebrafish).